The chain runs to 104 residues: MAAKIRRDDEVIVLTGKDKGKRGKVKNVLSSGKVIVEGINLVKKHQKAVPALNQPGGIVEKEAAIQVSNVAIFNAATGKADRVGFRFEDGKKVRFFKSNSETIK.

The protein belongs to the universal ribosomal protein uL24 family. In terms of assembly, part of the 50S ribosomal subunit.

One of two assembly initiator proteins, it binds directly to the 5'-end of the 23S rRNA, where it nucleates assembly of the 50S subunit. In terms of biological role, one of the proteins that surrounds the polypeptide exit tunnel on the outside of the subunit. The protein is Large ribosomal subunit protein uL24 of Shigella dysenteriae serotype 1 (strain Sd197).